A 255-amino-acid chain; its full sequence is 1-(5-phosphoribosyl)-5-[(5-phosphoribosylamino)methylideneamino] imidazole-4-carboxamide isomerase (255 aa).

Catalysis depends on aspartate 8, which acts as the Proton acceptor. Aspartate 129 (proton donor) is an active-site residue.

This sequence belongs to the HisA/HisF family.

Its subcellular location is the cytoplasm. The enzyme catalyses 1-(5-phospho-beta-D-ribosyl)-5-[(5-phospho-beta-D-ribosylamino)methylideneamino]imidazole-4-carboxamide = 5-[(5-phospho-1-deoxy-D-ribulos-1-ylimino)methylamino]-1-(5-phospho-beta-D-ribosyl)imidazole-4-carboxamide. It functions in the pathway amino-acid biosynthesis; L-histidine biosynthesis; L-histidine from 5-phospho-alpha-D-ribose 1-diphosphate: step 4/9. This chain is 1-(5-phosphoribosyl)-5-[(5-phosphoribosylamino)methylideneamino] imidazole-4-carboxamide isomerase, found in Synechococcus sp. (strain CC9902).